The chain runs to 337 residues: Porphobilinogen deaminase (337 aa).

At C254 the chain carries S-(dipyrrolylmethanemethyl)cysteine.

This sequence belongs to the HMBS family. Requires dipyrromethane as cofactor.

It catalyses the reaction 4 porphobilinogen + H2O = hydroxymethylbilane + 4 NH4(+). Its pathway is porphyrin-containing compound metabolism; protoporphyrin-IX biosynthesis; coproporphyrinogen-III from 5-aminolevulinate: step 2/4. In terms of biological role, tetrapolymerization of the monopyrrole PBG into the hydroxymethylbilane pre-uroporphyrinogen in several discrete steps. The chain is Porphobilinogen deaminase (pda-1) from Neurospora crassa (strain ATCC 24698 / 74-OR23-1A / CBS 708.71 / DSM 1257 / FGSC 987).